Consider the following 147-residue polypeptide: Transthyretin (147 aa).

The signal sequence occupies residues 1 to 20; the sequence is MASLRLFLLCLAGLIFASEA. Residue cysteine 30 is modified to Sulfocysteine. Residue lysine 35 participates in L-thyroxine binding. Glutamate 62 carries the post-translational modification 4-carboxyglutamate. At serine 72 the chain carries Phosphoserine. Residue glutamate 74 coordinates L-thyroxine. An N-linked (GlcNAc...) asparagine glycan is attached at asparagine 118. Residue serine 137 participates in L-thyroxine binding.

Belongs to the transthyretin family. In terms of assembly, homotetramer. Dimer of dimers. In the homotetramer, subunits assemble around a central channel that can accommodate two ligand molecules. Interacts with RBP4. In terms of processing, sulfonation of the reactive cysteine Cys-30 enhances the stability of the native conformation of TTR, avoiding misassembly of the protein leading to amyloid formation. In terms of tissue distribution, detected in serum and cerebrospinal fluid (at protein level). Highly expressed in the choroid plexus. Detected at lower levels in the liver.

The protein localises to the secreted. Thyroid hormone-binding protein. Probably transports thyroxine from the bloodstream to the brain. This Rattus norvegicus (Rat) protein is Transthyretin (Ttr).